Consider the following 463-residue polypeptide: Phosphomethylpyrimidine synthase (463 aa).

Substrate contacts are provided by residues N80, M109, Y138, H173, 193-195 (SRG), 234-237 (DGLR), and E273. Residue H277 participates in Zn(2+) binding. Position 300 (Y300) interacts with substrate. H341 serves as a coordination point for Zn(2+). Residues C421, C424, and C429 each contribute to the [4Fe-4S] cluster site.

It belongs to the ThiC family. Homodimer. It depends on [4Fe-4S] cluster as a cofactor.

The catalysed reaction is 5-amino-1-(5-phospho-beta-D-ribosyl)imidazole + S-adenosyl-L-methionine = 4-amino-2-methyl-5-(phosphooxymethyl)pyrimidine + CO + 5'-deoxyadenosine + formate + L-methionine + 3 H(+). It functions in the pathway cofactor biosynthesis; thiamine diphosphate biosynthesis. Functionally, catalyzes the synthesis of the hydroxymethylpyrimidine phosphate (HMP-P) moiety of thiamine from aminoimidazole ribotide (AIR) in a radical S-adenosyl-L-methionine (SAM)-dependent reaction. The sequence is that of Phosphomethylpyrimidine synthase from Anaeromyxobacter sp. (strain K).